Here is a 325-residue protein sequence, read N- to C-terminus: GMP reductase (325 aa).

C174 (thioimidate intermediate) is an active-site residue. Residue 203–226 (IIADGGIRTHGDIAKSIRFGATMV) participates in NADP(+) binding.

It belongs to the IMPDH/GMPR family. GuaC type 2 subfamily.

The catalysed reaction is IMP + NH4(+) + NADP(+) = GMP + NADPH + 2 H(+). Functionally, catalyzes the irreversible NADPH-dependent deamination of GMP to IMP. It functions in the conversion of nucleobase, nucleoside and nucleotide derivatives of G to A nucleotides, and in maintaining the intracellular balance of A and G nucleotides. The sequence is that of GMP reductase from Helicobacter pylori (strain G27).